Reading from the N-terminus, the 285-residue chain is Hypersensitive-induced response protein 3 (285 aa).

Gly-2 carries the N-myristoyl glycine lipid modification. Coiled coils occupy residues 113–139 (NLDD…MTAY) and 165–185 (NAAA…KIIQ).

Self-interacts and forms heteromers. Interacts with NB-LRR class of R proteins before R proteins (e.g. RPS2 or RPM1) are activated by the effectors.

It is found in the cell membrane. The sequence is that of Hypersensitive-induced response protein 3 (HIR3) from Arabidopsis thaliana (Mouse-ear cress).